A 694-amino-acid polypeptide reads, in one-letter code: Long-chain-fatty-acid--CoA ligase 3 (694 aa).

The tract at residues 1-25 (MSEQHSVAVGKAANEHETAPRRNVR) is disordered. S2 bears the N-acetylserine mark. 269–280 (YTSGSISAPKGV) is a binding site for ATP. The FACS signature appears at 527 to 576 (DGWFRTGDIVEWTPKGQLKIIDRRKNLVKTLNGEYIALEKLESVYRSNSY).

The protein belongs to the ATP-dependent AMP-binding enzyme family. In terms of assembly, interacts with FRK1. Mg(2+) serves as cofactor.

It localises to the cell membrane. It carries out the reaction a long-chain fatty acid + ATP + CoA = a long-chain fatty acyl-CoA + AMP + diphosphate. The enzyme catalyses (9Z)-octadecenoate + ATP + CoA = (9Z)-octadecenoyl-CoA + AMP + diphosphate. It catalyses the reaction hexadecanoate + ATP + CoA = hexadecanoyl-CoA + AMP + diphosphate. The catalysed reaction is (9Z)-hexadecenoate + ATP + CoA = (9Z)-hexadecenoyl-CoA + AMP + diphosphate. It carries out the reaction (9Z)-tetradecenoate + ATP + CoA = (9Z)-tetradecenoyl-CoA + AMP + diphosphate. The enzyme catalyses (9Z,12Z)-octadecadienoate + ATP + CoA = (9Z,12Z)-octadecadienoyl-CoA + AMP + diphosphate. Activates endogenous long-chain fatty acids (LCFA) by esterification of the fatty acids into metabolically active CoA-thioesters for subsequent degradation or incorporation into phospholipids. Acts preferentially on C16 and C18 fatty acids with a cis-double bond at C-9-C-10. This is Long-chain-fatty-acid--CoA ligase 3 (FAA3) from Saccharomyces cerevisiae (strain ATCC 204508 / S288c) (Baker's yeast).